A 501-amino-acid polypeptide reads, in one-letter code: ATP synthase subunit alpha (501 aa).

169–176 (GDRQTGKT) contacts ATP.

It belongs to the ATPase alpha/beta chains family. As to quaternary structure, F-type ATPases have 2 components, CF(1) - the catalytic core - and CF(0) - the membrane proton channel. CF(1) has five subunits: alpha(3), beta(3), gamma(1), delta(1), epsilon(1). CF(0) has three main subunits: a(1), b(2) and c(9-12). The alpha and beta chains form an alternating ring which encloses part of the gamma chain. CF(1) is attached to CF(0) by a central stalk formed by the gamma and epsilon chains, while a peripheral stalk is formed by the delta and b chains.

Its subcellular location is the cell membrane. It catalyses the reaction ATP + H2O + 4 H(+)(in) = ADP + phosphate + 5 H(+)(out). Produces ATP from ADP in the presence of a proton gradient across the membrane. The alpha chain is a regulatory subunit. This chain is ATP synthase subunit alpha, found in Streptococcus mutans serotype c (strain ATCC 700610 / UA159).